The primary structure comprises 158 residues: Large ribosomal subunit protein uL15 (158 aa).

Over residues 1-13 the composition is skewed to basic and acidic residues; sequence MKLNEIKDNEGST. The disordered stretch occupies residues 1-45; the sequence is MKLNEIKDNEGSTHSRKRLGRGIGSGSGKTGGRGVKGQKSRSGVA. Residues 21–35 show a composition bias toward gly residues; the sequence is RGIGSGSGKTGGRGV.

Belongs to the universal ribosomal protein uL15 family. Part of the 50S ribosomal subunit.

Its function is as follows. Binds to the 23S rRNA. This chain is Large ribosomal subunit protein uL15, found in Rhizobium leguminosarum bv. trifolii (strain WSM2304).